A 261-amino-acid chain; its full sequence is High-affinity zinc uptake system membrane protein ZnuB (261 aa).

Topologically, residues 1–7 are periplasmic; that stretch reads MIELLFP. A helical transmembrane segment spans residues 8 to 28; it reads GWLAGIMLACAAGPLGSFVVW. Over 29–53 the chain is Cytoplasmic; it reads RRMSYFGDTLAHASLLGVAFGLLLD. The helical transmembrane segment at 54–74 threads the bilayer; that stretch reads VNPFYAVIAVTLLLAGGLVWL. At 75–83 the chain is on the periplasmic side; that stretch reads EKRPQLAID. Residues 84–104 form a helical membrane-spanning segment; it reads TLLGIMAHSALSLGLVVVSLM. The Cytoplasmic portion of the chain corresponds to 105–121; sequence SNIRVDLMAYLFGDLLA. Residues 122-142 traverse the membrane as a helical segment; sequence VTPEDLISIAIGVVIVVAILF. The Periplasmic segment spans residues 143 to 177; sequence WQWRNLLSMTISPDLAFVDGVKLQRVKLLLMLVTA. Residues 178–198 traverse the membrane as a helical segment; the sequence is LTIGVAMKFVGALIITSLLII. The Cytoplasmic segment spans residues 199 to 213; it reads PAATARRFARTPEQM. Residues 214-234 traverse the membrane as a helical segment; it reads AGVAVLVGMVAVTGGLTFSAV. Tyr-235 is a topological domain (periplasmic). The chain crosses the membrane as a helical span at residues 236–256; it reads DTPAGPSVVLCAALLFILSMM. The Cytoplasmic segment spans residues 257–261; the sequence is KKQAS.

This sequence belongs to the ABC-3 integral membrane protein family.

The protein resides in the cell inner membrane. Its function is as follows. Involved in the high-affinity zinc uptake transport system. The polypeptide is High-affinity zinc uptake system membrane protein ZnuB (znuB) (Escherichia coli (strain K12)).